The primary structure comprises 1439 residues: Myomesin-3 (1439 aa).

The tract at residues 1–57 (MTLPHSPGSAGEPQASQTVQVHRLEHRQEEEQKEERQHSLQMGSSVQRRTYRSSEEE) is disordered. Basic and acidic residues predominate over residues 22–38 (HRLEHRQEEEQKEERQH). Polar residues predominate over residues 39–48 (SLQMGSSVQR). Positions 119–149 (QRLLRQRRDWKALRQRTEEKVREAKELIELC) form a coiled coil. 2 consecutive Ig-like C2-type domains span residues 154 to 246 (PWFW…AKVL) and 269 to 362 (PSAE…AYVF). 5 consecutive Fibronectin type-III domains span residues 376–471 (SPLN…TGDY), 504–599 (APTN…LKGK), 605–698 (PPAQ…VKQA), 704–799 (APYD…CKEW), and 806–901 (PPYD…LEDK). Ig-like C2-type domains lie at 1122–1207 (PYFQ…LDLT) and 1336–1425 (AKVV…VTIS).

As to quaternary structure, homodimer. In terms of tissue distribution, mainly expressed in slow muscle, extraocular muscle and embryonic/neonatal skeletal muscle (at protein level). Expression in skeletal muscle is fiber type specific, with the highest levels in type IIA fibers (intermediate speed) and lower levels in type I fibers.

It is found in the cytoplasm. Its subcellular location is the myofibril. It localises to the sarcomere. The protein resides in the m line. May link the intermediate filament cytoskeleton to the M-disk of the myofibrils in striated muscle. The chain is Myomesin-3 (Myom3) from Mus musculus (Mouse).